Reading from the N-terminus, the 400-residue chain is Elongation factor Tu 1 (400 aa).

Residues lysine 10–glutamine 209 form the tr-type G domain. The tract at residues glycine 19 to threonine 26 is G1. Glycine 19 to threonine 26 contacts GTP. Threonine 26 is a binding site for Mg(2+). The G2 stretch occupies residues glycine 60 to asparagine 64. The segment at aspartate 81–glycine 84 is G3. GTP contacts are provided by residues aspartate 81–histidine 85 and asparagine 136–aspartate 139. The G4 stretch occupies residues asparagine 136 to aspartate 139. Positions serine 174 to leucine 176 are G5.

The protein belongs to the TRAFAC class translation factor GTPase superfamily. Classic translation factor GTPase family. EF-Tu/EF-1A subfamily. Monomer.

The protein resides in the cytoplasm. The catalysed reaction is GTP + H2O = GDP + phosphate + H(+). Its function is as follows. GTP hydrolase that promotes the GTP-dependent binding of aminoacyl-tRNA to the A-site of ribosomes during protein biosynthesis. This Pelotomaculum thermopropionicum (strain DSM 13744 / JCM 10971 / SI) protein is Elongation factor Tu 1.